A 372-amino-acid polypeptide reads, in one-letter code: Cyanuric acid amidohydrolase (372 aa).

Positions 1 to 105 (MPTTLRRAHV…IVFEAREVDE (105 aa)) are RU A. Substrate-binding positions include Arg-56 and 84–85 (SG). The segment at 115–252 (SLALGRARTP…HEIMVAGMSR (138 aa)) is RU B. Lys-165 is a catalytic residue. Substrate-binding positions include Arg-197 and 235 to 236 (SG). Ser-235 serves as the catalytic Nucleophile. The segment at 258–372 (LAIDHGVMRD…GPVAIIVERT (115 aa)) is RU C. Glu-305 lines the Mg(2+) pocket. Substrate is bound by residues Arg-332 and 351-352 (SG). The Mg(2+) site is built by Ala-354, Gln-357, Gly-358, Pro-359, and Gly-362.

Belongs to the cyclic amide hydrolase (CyAH) family. In terms of assembly, homotetramer.

The catalysed reaction is cyanurate + H2O = 1-carboxybiuret + H(+). Its pathway is xenobiotic degradation; atrazine degradation; biuret from cyanurate: step 1/1. Its activity is regulated as follows. Inhibited by barbituric acid. Its function is as follows. Responsible for the hydrolysis of cyanuric acid, an intermediate formed during catabolism of s-triazine based compounds in herbicides such as atrazine and polymers such as melamine. Catalyzes the hydrolytic opening of the s-triazine ring of cyanuric acid (2,4,6-trihydroxy-s-triazine) to yield carbon dioxide and carboxybiuret, which spontaneously decarboxylates to biuret. This chain is Cyanuric acid amidohydrolase, found in Bradyrhizobium sp. (strain ORS 375).